We begin with the raw amino-acid sequence, 246 residues long: tRNA (guanine-N(1)-)-methyltransferase (246 aa).

Residues glycine 113 and 133 to 138 (IGDYVL) each bind S-adenosyl-L-methionine.

It belongs to the RNA methyltransferase TrmD family. Homodimer.

The protein resides in the cytoplasm. The enzyme catalyses guanosine(37) in tRNA + S-adenosyl-L-methionine = N(1)-methylguanosine(37) in tRNA + S-adenosyl-L-homocysteine + H(+). Specifically methylates guanosine-37 in various tRNAs. This is tRNA (guanine-N(1)-)-methyltransferase from Haemophilus influenzae (strain PittGG).